Reading from the N-terminus, the 628-residue chain is 69 kDa protein (628 aa).

3 disordered regions span residues 1–24, 141–492, and 537–628; these read MSNGLPISIGRPCTHDSQRSLSAS, HFHA…SDPV, and VLPT…PDTD. Composition is skewed to polar residues over residues 166-178 and 295-305; these read RTSVRQPRSTTRG and TGHIPSTTASR. Positions 433-451 are enriched in pro residues; it reads EGPPPPPRRLPSPATPPQS. The segment covering 586–596 has biased composition (polar residues); the sequence is PSGPLRSQSPS.

This sequence belongs to the tymoviridae protein p69 family.

Its function is as follows. Acts as a suppressor of RNA-mediated gene silencing, also known as post-transcriptional gene silencing (PTGS), a mechanism of plant viral defense that limits the accumulation of viral RNAs. The sequence is that of 69 kDa protein from Turnip yellow mosaic virus (isolate Australia).